The following is a 404-amino-acid chain: Dual-specificity RNA methyltransferase RlmN (404 aa).

Residue glutamate 118 is the Proton acceptor of the active site. The Radical SAM core domain occupies 125–357 (VGRAGALCVS…NKAGYSSPIR (233 aa)). Cysteine 132 and cysteine 368 form a disulfide bridge. Residues cysteine 139, cysteine 143, and cysteine 146 each contribute to the [4Fe-4S] cluster site. Residues 194–195 (GE), serine 226, 248–250 (SLH), and asparagine 325 each bind S-adenosyl-L-methionine. The S-methylcysteine intermediate role is filled by cysteine 368.

It belongs to the radical SAM superfamily. RlmN family. Requires [4Fe-4S] cluster as cofactor.

The protein resides in the cytoplasm. The catalysed reaction is adenosine(2503) in 23S rRNA + 2 reduced [2Fe-2S]-[ferredoxin] + 2 S-adenosyl-L-methionine = 2-methyladenosine(2503) in 23S rRNA + 5'-deoxyadenosine + L-methionine + 2 oxidized [2Fe-2S]-[ferredoxin] + S-adenosyl-L-homocysteine. The enzyme catalyses adenosine(37) in tRNA + 2 reduced [2Fe-2S]-[ferredoxin] + 2 S-adenosyl-L-methionine = 2-methyladenosine(37) in tRNA + 5'-deoxyadenosine + L-methionine + 2 oxidized [2Fe-2S]-[ferredoxin] + S-adenosyl-L-homocysteine. Functionally, specifically methylates position 2 of adenine 2503 in 23S rRNA and position 2 of adenine 37 in tRNAs. m2A2503 modification seems to play a crucial role in the proofreading step occurring at the peptidyl transferase center and thus would serve to optimize ribosomal fidelity. The chain is Dual-specificity RNA methyltransferase RlmN from Caulobacter vibrioides (strain ATCC 19089 / CIP 103742 / CB 15) (Caulobacter crescentus).